We begin with the raw amino-acid sequence, 312 residues long: Urease accessory protein UreD (312 aa).

The protein belongs to the UreD family. As to quaternary structure, ureD, UreF and UreG form a complex that acts as a GTP-hydrolysis-dependent molecular chaperone, activating the urease apoprotein by helping to assemble the nickel containing metallocenter of UreC. The UreE protein probably delivers the nickel.

The protein resides in the cytoplasm. Required for maturation of urease via the functional incorporation of the urease nickel metallocenter. This is Urease accessory protein UreD from Marinomonas sp. (strain MWYL1).